Reading from the N-terminus, the 335-residue chain is Pyridoxal 5'-phosphate synthase subunit PdxS (335 aa).

A D-ribose 5-phosphate-binding site is contributed by D30. K87 (schiff-base intermediate with D-ribose 5-phosphate) is an active-site residue. G159 contacts D-ribose 5-phosphate. R171 is a D-glyceraldehyde 3-phosphate binding site. D-ribose 5-phosphate-binding positions include G257 and 278–279 (GS).

The protein belongs to the PdxS/SNZ family. As to quaternary structure, homohexamer. In the presence of PdxT, forms a dodecamer of heterodimers.

The catalysed reaction is aldehydo-D-ribose 5-phosphate + D-glyceraldehyde 3-phosphate + L-glutamine = pyridoxal 5'-phosphate + L-glutamate + phosphate + 3 H2O + H(+). The protein operates within cofactor biosynthesis; pyridoxal 5'-phosphate biosynthesis. Functionally, catalyzes the formation of pyridoxal 5'-phosphate from ribose 5-phosphate (RBP), glyceraldehyde 3-phosphate (G3P) and ammonia. The ammonia is provided by the PdxT subunit. Can also use ribulose 5-phosphate and dihydroxyacetone phosphate as substrates, resulting from enzyme-catalyzed isomerization of RBP and G3P, respectively. This chain is Pyridoxal 5'-phosphate synthase subunit PdxS, found in Pyrococcus horikoshii (strain ATCC 700860 / DSM 12428 / JCM 9974 / NBRC 100139 / OT-3).